Consider the following 194-residue polypeptide: Inosine triphosphate pyrophosphatase (194 aa).

ITP is bound at residue T10–K15. E37 is a Mg(2+) binding site. Residues K49, D65–V66, K82, F142–D145, K166, and H171–R172 each bind ITP.

This sequence belongs to the HAM1 NTPase family. In terms of assembly, homodimer. Mg(2+) serves as cofactor. Requires Mn(2+) as cofactor.

The protein resides in the cytoplasm. The catalysed reaction is ITP + H2O = IMP + diphosphate + H(+). It carries out the reaction dITP + H2O = dIMP + diphosphate + H(+). The enzyme catalyses XTP + H2O = XMP + diphosphate + H(+). Functionally, pyrophosphatase that hydrolyzes non-canonical purine nucleotides such as inosine triphosphate (ITP), deoxyinosine triphosphate (dITP) or xanthosine 5'-triphosphate (XTP) to their respective monophosphate derivatives. The enzyme does not distinguish between the deoxy- and ribose forms. Probably excludes non-canonical purines from RNA and DNA precursor pools, thus preventing their incorporation into RNA and DNA and avoiding chromosomal lesions. The polypeptide is Inosine triphosphate pyrophosphatase (Giardia intestinalis (strain ATCC 50803 / WB clone C6) (Giardia lamblia)).